Reading from the N-terminus, the 517-residue chain is 2-isopropylmalate synthase (517 aa).

One can recognise a Pyruvate carboxyltransferase domain in the interval 5-268 (IIIFDTTLRD…DTRINTQEIH (264 aa)). Mn(2+)-binding residues include D14, H202, H204, and N238. The segment at 393–517 (SLDVITSQTI…ADLKSHKISQ (125 aa)) is regulatory domain.

The protein belongs to the alpha-IPM synthase/homocitrate synthase family. LeuA type 1 subfamily. Homodimer. It depends on Mn(2+) as a cofactor.

The protein localises to the cytoplasm. The catalysed reaction is 3-methyl-2-oxobutanoate + acetyl-CoA + H2O = (2S)-2-isopropylmalate + CoA + H(+). The protein operates within amino-acid biosynthesis; L-leucine biosynthesis; L-leucine from 3-methyl-2-oxobutanoate: step 1/4. In terms of biological role, catalyzes the condensation of the acetyl group of acetyl-CoA with 3-methyl-2-oxobutanoate (2-ketoisovalerate) to form 3-carboxy-3-hydroxy-4-methylpentanoate (2-isopropylmalate). The chain is 2-isopropylmalate synthase from Histophilus somni (strain 2336) (Haemophilus somnus).